The sequence spans 152 residues: MFRGASAINMDAKGRIAIPMRYRDQLHVHGTGVIVITIDIQSQCLLIYPLQEWELIEAKLLTLSDTNPVERSFKRRLLGHAHECELDSHGRVLVPPTLRQYAGLDKKAMLVGLLNKFELWDEAAWQQQMDDSQTLIQSQDLSSQDRLADFSL.

2 consecutive SpoVT-AbrB domains span residues 5 to 52 (ASAI…PLQE) and 81 to 124 (AHEC…DEAA).

Belongs to the MraZ family. In terms of assembly, forms oligomers.

The protein localises to the cytoplasm. It is found in the nucleoid. This is Transcriptional regulator MraZ from Shewanella denitrificans (strain OS217 / ATCC BAA-1090 / DSM 15013).